Consider the following 337-residue polypeptide: Homeobox protein knotted-1-like 4 (337 aa).

Disordered stretches follow at residues 1-56 (MEQQ…SFHE) and 159-190 (FTLD…GLPE). Over residues 27–38 (PTSTSTSPAVPS) the composition is skewed to low complexity. Positions 200 to 220 (ELKSHLLNKYSGYLSSLWREL) constitute an ELK domain. Residues 221–284 (SKKKKKGKLP…NQRKRHWKPT (64 aa)) constitute a DNA-binding region (homeobox; TALE-type).

It belongs to the TALE/KNOX homeobox family.

It localises to the nucleus. This Oryza sativa subsp. japonica (Rice) protein is Homeobox protein knotted-1-like 4 (OSH10).